The sequence spans 276 residues: Short-chain dehydrogenase/reductase ATR10 (276 aa).

Residues Ile29, Ser51, Asp78, and Asn105 each coordinate NADP(+). The active-site Proton donor is the Ser161. Lys185 and Thr214 together coordinate NADP(+). Lys185 functions as the Lowers pKa of active site Tyr in the catalytic mechanism.

The protein belongs to the short-chain dehydrogenases/reductases (SDR) family.

It participates in mycotoxin biosynthesis. Short-chain dehydrogenase/reductase; part of the core atranone cluster (CAC) which products are predicted to catalyze most or all steps of mycotoxin atranone synthesis, starting from geranylgeranyl pyrophosphate (GGPP). The initial cyclization of GGPP to dolabellane is probably performed by the terpene cyclase ATR13. The Baeyer-Villiger oxidation near the end of the atranone synthesis, which converts atranones D and E to atranones F and G is predicted to be catalyzed by the monooxygenase ATR8. Of the CAC's other predicted gene products, the reducing PKS ATR6 might synthesize a polyketide chain. This polyketide is probably transferred onto the atranone backbone by the polyketide transferase ATR5. Other predicted CAC products include 4 oxygenases (ATR2, ATR3, ATR4, and ATR14), 3 short-chain reductases (ATR7, ATR9, and ATR10), and a methyltransferase (ATR12). These may all be involved in the various steps of atranone biosynthesis, although their specific roles must await experimental determination. The protein is Short-chain dehydrogenase/reductase ATR10 of Stachybotrys chlorohalonatus (strain IBT 40285).